The chain runs to 521 residues: Cytochrome P450 1A1 (521 aa).

Residue Phe229 coordinates substrate. Cys463 provides a ligand contact to heme.

This sequence belongs to the cytochrome P450 family. Heme is required as a cofactor.

The protein localises to the endoplasmic reticulum membrane. It localises to the microsome membrane. The enzyme catalyses an organic molecule + reduced [NADPH--hemoprotein reductase] + O2 = an alcohol + oxidized [NADPH--hemoprotein reductase] + H2O + H(+). Functionally, cytochromes P450 are a group of heme-thiolate monooxygenases. They oxidize a variety of structurally unrelated compounds, including steroids, fatty acids, and xenobiotics. The chain is Cytochrome P450 1A1 (cyp1a1) from Chelon auratus (Golden grey mullet).